Reading from the N-terminus, the 690-residue chain is Protein MODIFIED TRANSPORT TO THE VACUOLE 1 (690 aa).

The region spanning 20-150 is the VHS domain; that stretch reads VTSDEDKVAP…PESINRRIEG (131 aa). Disordered stretches follow at residues 228–258 and 518–551; these read DGNY…SVRV and FSID…HQAP. The segment covering 243–257 has biased composition (low complexity); the sequence is GHASGEASESSASVR. Residues 520–536 are compositionally biased toward polar residues; sequence IDENNSNQKGSSSSTLP.

Binds to clathrin heavy chain. As to expression, expressed in inflorescence stems, stigmas, roots, roots meristems, embryos, and floral and leaf vasculatures, but absent from the floral abscission zone.

The protein localises to the golgi apparatus. It localises to the trans-Golgi network. It is found in the cytoplasmic vesicle. Its subcellular location is the clathrin-coated vesicle. Functionally, mediates clathrin-dependent trafficking of vacuolar cargo from the trans-Golgi network (TGN). Promotes plant growth. The sequence is that of Protein MODIFIED TRANSPORT TO THE VACUOLE 1 from Arabidopsis thaliana (Mouse-ear cress).